The primary structure comprises 444 residues: MSIEAEALLQEAKESIEAAQNYRSELQQRLHGLSQARKQVRGSASQTRKALQRHFQELQTAVSRLLIDRLNGLLQEVDNIELDSVSPLDDCQKLIEHGVSTADELLREGEAAIRCSINETEDKLGSFTKKALQIQLDSLPEVPSLVDVPCLSAQLDDSLLHMFRAHVARHGSVASHPPVQIEELVERPGGVLVRWCKVDDDFSPQDYRLQFRRSNSSQYEDAYIGKDTEFLVLHLDPHVDHLFRVCARGEGRTEWSPWSIPQTGYTTLAPHEWCPGVDGYILSSRKNIAMRSDSSAPGHGGVLYSNSPTYFCGQTLTFKITAAGQTDKRDSLGVCADSRTDTDSLQRDQAVCISTNGAVFVNGKEMTNQLPAITVGSSVTFDMEVVSLFPVNNNNPSDGGNFKLRVTIGSGNREVVFDWLLDQVLDSLFFGCSFTHPGWKVLVF.

A coiled-coil region spans residues 1–65 (MSIEAEALLQ…QELQTAVSRL (65 aa)). Residues 177–270 (PPVQIEELVE…PQTGYTTLAP (94 aa)) form the Fibronectin type-III domain.

It belongs to the cytokine receptor-like factor 3 family.

The protein resides in the cytoplasm. Functionally, may play a role in the negative regulation of cell cycle progression. In Danio rerio (Zebrafish), this protein is Cytokine receptor-like factor 3 (crlf3).